The primary structure comprises 474 residues: Trigger factor (474 aa).

The PPIase FKBP-type domain occupies 171 to 258 (GDVAVIDFQG…LKELKTRDLP (88 aa)). The interval 441 to 474 (TEVDAASATVETTATETAEEAPEAPKAKKGKKKA) is disordered. The segment covering 444–456 (DAASATVETTATE) has biased composition (low complexity).

This sequence belongs to the FKBP-type PPIase family. Tig subfamily.

It localises to the cytoplasm. The catalysed reaction is [protein]-peptidylproline (omega=180) = [protein]-peptidylproline (omega=0). Functionally, involved in protein export. Acts as a chaperone by maintaining the newly synthesized protein in an open conformation. Functions as a peptidyl-prolyl cis-trans isomerase. This is Trigger factor from Synechococcus sp. (strain ATCC 27144 / PCC 6301 / SAUG 1402/1) (Anacystis nidulans).